We begin with the raw amino-acid sequence, 82 residues long: RNA-binding protein Hfq (82 aa).

Residues 9–69 (DQLLNTARKD…ISTIIPAKII (61 aa)) enclose the Sm domain.

This sequence belongs to the Hfq family. In terms of assembly, homohexamer.

In terms of biological role, RNA chaperone that binds small regulatory RNA (sRNAs) and mRNAs to facilitate mRNA translational regulation in response to envelope stress, environmental stress and changes in metabolite concentrations. Also binds with high specificity to tRNAs. In Leptospira borgpetersenii serovar Hardjo-bovis (strain L550), this protein is RNA-binding protein Hfq.